We begin with the raw amino-acid sequence, 134 residues long: ATP synthase epsilon chain, chloroplastic (134 aa).

It belongs to the ATPase epsilon chain family. F-type ATPases have 2 components, CF(1) - the catalytic core - and CF(0) - the membrane proton channel. CF(1) has five subunits: alpha(3), beta(3), gamma(1), delta(1), epsilon(1). CF(0) has three main subunits: a, b and c.

It is found in the plastid. Its subcellular location is the chloroplast thylakoid membrane. Functionally, produces ATP from ADP in the presence of a proton gradient across the membrane. The sequence is that of ATP synthase epsilon chain, chloroplastic from Pyropia yezoensis (Susabi-nori).